We begin with the raw amino-acid sequence, 401 residues long: Probable trafficking protein particle complex subunit 13 homolog (401 aa).

It belongs to the TRAPPC13 family.

The sequence is that of Probable trafficking protein particle complex subunit 13 homolog from Caenorhabditis elegans.